The following is a 358-amino-acid chain: Protein-glutamate methylesterase/protein-glutamine glutaminase 2 (358 aa).

The 118-residue stretch at 7–124 (SVLLVDDSAV…KNFLIESAAE (118 aa)) folds into the Response regulatory domain. Aspartate 58 is modified (4-aspartylphosphate). A CheB-type methylesterase domain is found at 170–358 (AQTTERIVAI…QEIHQAILHR (189 aa)). Residues serine 182, histidine 208, and aspartate 304 contribute to the active site.

It belongs to the CheB family. Post-translationally, phosphorylated by CheA. Phosphorylation of the N-terminal regulatory domain activates the methylesterase activity.

It is found in the cytoplasm. The catalysed reaction is [protein]-L-glutamate 5-O-methyl ester + H2O = L-glutamyl-[protein] + methanol + H(+). It carries out the reaction L-glutaminyl-[protein] + H2O = L-glutamyl-[protein] + NH4(+). Its function is as follows. Involved in chemotaxis. Part of a chemotaxis signal transduction system that modulates chemotaxis in response to various stimuli. Catalyzes the demethylation of specific methylglutamate residues introduced into the chemoreceptors (methyl-accepting chemotaxis proteins or MCP) by CheR. Also mediates the irreversible deamidation of specific glutamine residues to glutamic acid. This is Protein-glutamate methylesterase/protein-glutamine glutaminase 2 from Pseudomonas syringae pv. tomato (strain ATCC BAA-871 / DC3000).